A 316-amino-acid polypeptide reads, in one-letter code: MKRFHSHFNGYSVEFSPFEEQRLACVTSQHFGIIGNGRQYILDVLDRDIGAFKTFDTRDGLYDCTWSEENECHVASSSGDGSIKIWDTQAPSGGRPIKSFEEHTKEVYSVDWNLVTKDTFITGSWDQSIKIWNPRMDRSLKTFREHRYCIYSAIWSPRNAHLFASVSGDRTLKIWDSRDNRSLNTIKAHDHEILTCDWNKYNDKEVVTGSVDKTIRIWDIRYPDRPTTILRGHTYAVRRIKCSPHSESMLASCSYDMSVIVWDRAREQDPIIARMDHHTEFVVGLDWNMFIDGQMASCSWDEQVCVWNLGRPGQFR.

WD repeat units follow at residues 56 to 96 (DTRD…GGRP), 102 to 142 (EHTK…SLKT), 145 to 185 (EHRY…SLNT), 188 to 228 (AHDH…RPTT), 232 to 272 (GHTY…DPII), and 277 to 316 (HHTE…GQFR).

It belongs to the WD repeat peroxin-7 family. As to quaternary structure, interacts with PEX5; interaction only takes place when PEX7 is associated with cargo proteins.

It localises to the cytoplasm. It is found in the cytosol. The protein localises to the peroxisome matrix. Functionally, receptor required for the peroxisomal import of proteins containing a C-terminal PTS2-type peroxisomal targeting signal. Specifically binds to cargo proteins containing a PTS2 peroxisomal targeting signal in the cytosol. Cargo protein-binding triggers interaction with PEX5 and formation of a ternary complex composed of PEX5 and PEX7 along with PTS2-containing cargo proteins, which is tranlocated into peroxisomes by passing through the PEX13-PEX14 docking complex. The sequence is that of Peroxisomal targeting signal 2 receptor (pex7) from Dictyostelium discoideum (Social amoeba).